A 609-amino-acid chain; its full sequence is Glutamine--fructose-6-phosphate aminotransferase [isomerizing] (609 aa).

The active-site Nucleophile; for GATase activity is the cysteine 2. Residues 2–218 enclose the Glutamine amidotransferase type-2 domain; the sequence is CGIVGAVAQR…EGDIAEVTRR (217 aa). 2 SIS domains span residues 286-426 and 458-599; these read AAKL…LKGV and LAED…VDQP. The active-site For Fru-6P isomerization activity is lysine 604.

In terms of assembly, homodimer.

It localises to the cytoplasm. The enzyme catalyses D-fructose 6-phosphate + L-glutamine = D-glucosamine 6-phosphate + L-glutamate. Functionally, catalyzes the first step in hexosamine metabolism, converting fructose-6P into glucosamine-6P using glutamine as a nitrogen source. This chain is Glutamine--fructose-6-phosphate aminotransferase [isomerizing], found in Photorhabdus laumondii subsp. laumondii (strain DSM 15139 / CIP 105565 / TT01) (Photorhabdus luminescens subsp. laumondii).